Reading from the N-terminus, the 423-residue chain is Chitinase 1 (423 aa).

The first 22 residues, 1–22, serve as a signal peptide directing secretion; sequence MLSFVKKSIALVAALQAVTALA. The propeptide occupies 23–34; it reads TPISSEAGVEKR. The GH18 domain occupies 38-401; sequence FANAVYFTNW…STSHQGLGSQ (364 aa). Chitin-binding positions include 102–103 and 129–132; these read GT and GGWT. The active-site Proton donor is E171. Chitin-binding positions include Y172, 237–240, and W378; that span reads MAYD.

It belongs to the glycosyl hydrolase 18 family. Chitinase class V subfamily.

The protein localises to the secreted. It catalyses the reaction Random endo-hydrolysis of N-acetyl-beta-D-glucosaminide (1-&gt;4)-beta-linkages in chitin and chitodextrins.. The polypeptide is Chitinase 1 (CHI1) (Aphanocladium album (Wheat rust fungus)).